The chain runs to 222 residues: Superoxide dismutase [Mn], mitochondrial (222 aa).

A mitochondrion-targeting transit peptide spans 1–24 (MLSRGVCGTSRQLAPALGYLGSRQ). Position 50 (H50) interacts with Mn(2+). Y58 is modified (3'-nitrotyrosine). Residues K68 and K75 each carry the N6-acetyllysine; alternate modification. An N6-succinyllysine; alternate mark is found at K68 and K75. H98 lines the Mn(2+) pocket. The residue at position 114 (K114) is an N6-acetyllysine. Residues K122 and K130 each carry the N6-acetyllysine; alternate modification. N6-succinyllysine; alternate occurs at positions 122 and 130. Residues D183 and H187 each contribute to the Mn(2+) site. K202 is subject to N6-acetyllysine.

Belongs to the iron/manganese superoxide dismutase family. In terms of assembly, homotetramer. The cofactor is Mn(2+). Nitrated under oxidative stress. Nitration coupled with oxidation inhibits the catalytic activity. In terms of processing, acetylation at Lys-122 decreases enzymatic activity. Deacetylated by SIRT3 upon exposure to ionizing radiations or after long fasting. Post-translationally, polyubiquitinated; leading to proteasomal degradation. Deubiquitinated by USP36 which increases protein stability.

It is found in the mitochondrion matrix. It carries out the reaction 2 superoxide + 2 H(+) = H2O2 + O2. Destroys superoxide anion radicals which are normally produced within the cells and which are toxic to biological systems. This chain is Superoxide dismutase [Mn], mitochondrial (SOD2), found in Pongo pygmaeus (Bornean orangutan).